The primary structure comprises 209 residues: Octanoyltransferase (209 aa).

One can recognise a BPL/LPL catalytic domain in the interval 30-209 (DHEPEIIYLV…IQTEFNKIFK (180 aa)). Substrate contacts are provided by residues 69–76 (RGGKFTFH), 143–145 (AIG), and 156–158 (GVA). The Acyl-thioester intermediate role is filled by Cys174.

The protein belongs to the LipB family.

The protein localises to the cytoplasm. The catalysed reaction is octanoyl-[ACP] + L-lysyl-[protein] = N(6)-octanoyl-L-lysyl-[protein] + holo-[ACP] + H(+). Its pathway is protein modification; protein lipoylation via endogenous pathway; protein N(6)-(lipoyl)lysine from octanoyl-[acyl-carrier-protein]: step 1/2. Its function is as follows. Catalyzes the transfer of endogenously produced octanoic acid from octanoyl-acyl-carrier-protein onto the lipoyl domains of lipoate-dependent enzymes. Lipoyl-ACP can also act as a substrate although octanoyl-ACP is likely to be the physiological substrate. The sequence is that of Octanoyltransferase from Rickettsia rickettsii (strain Iowa).